We begin with the raw amino-acid sequence, 394 residues long: Na(+)/H(+) antiporter NhaA (394 aa).

The next 11 membrane-spanning stretches (helical) occupy residues 14–34 (AGGI…NSVF), 59–79 (LLMW…GMEV), 95–115 (IFPA…YWFI), 125–145 (GWAI…ALLS), 155–175 (FLLA…ALFF), 177–197 (NELS…LITM), 204–224 (GIIH…KSGV), 258–278 (WCAF…SLAG), 292–312 (ITLG…YLAV), 328–348 (VFAI…IAGL), and 362–382 (LSRL…YILL).

It belongs to the NhaA Na(+)/H(+) (TC 2.A.33) antiporter family.

Its subcellular location is the cell inner membrane. It catalyses the reaction Na(+)(in) + 2 H(+)(out) = Na(+)(out) + 2 H(+)(in). Na(+)/H(+) antiporter that extrudes sodium in exchange for external protons. The protein is Na(+)/H(+) antiporter NhaA of Haemophilus ducreyi (strain 35000HP / ATCC 700724).